Consider the following 434-residue polypeptide: Probable phosphoglucosamine mutase (434 aa).

Catalysis depends on Ser-91, which acts as the Phosphoserine intermediate. Positions 91, 229, 231, and 233 each coordinate Mg(2+). Phosphoserine is present on Ser-91.

This sequence belongs to the phosphohexose mutase family. Mg(2+) serves as cofactor. Post-translationally, activated by phosphorylation.

The catalysed reaction is alpha-D-glucosamine 1-phosphate = D-glucosamine 6-phosphate. Its function is as follows. Catalyzes the conversion of glucosamine-6-phosphate to glucosamine-1-phosphate. The protein is Probable phosphoglucosamine mutase of Methanosarcina barkeri (strain Fusaro / DSM 804).